A 186-amino-acid chain; its full sequence is Prorelaxin 1 (186 aa).

The signal sequence occupies residues 1-22 (MSSRLLLQLLGFWLFLSQPCRA). Disulfide bonds link cysteine 36–cysteine 173, cysteine 48–cysteine 186, and cysteine 172–cysteine 177. A propeptide spans 58 to 158 (SQEEPAPLAR…LKYLGSDAQS (101 aa)) (connecting peptide). At glutamine 163 the chain carries Pyrrolidone carboxylic acid.

The protein belongs to the insulin family. Heterodimer of a B chain and an A chain linked by two disulfide bonds.

The protein localises to the secreted. In terms of biological role, relaxin is an ovarian hormone that acts with estrogen to produce dilatation of the birth canal in many mammals. The chain is Prorelaxin 1 (Rln1) from Rattus norvegicus (Rat).